Consider the following 243-residue polypeptide: SDDLSFKFKNFSQNGKDLSFQGDASVIETGVLQLNKVGNNLPDETGGIARYIAPIHIWNCNTGEVASFITSFSFFMETSANPKAATDGLTFFLAPPDSPLRRAGGYFGLFEDTKDNDSSYQTVAVEFDTIGSPVNFDDPGFPHIGIDVNRVKSINAERWNKRYGLNNVANVEIIYEASSKTLTASLTYPSDQTSISVTSIVDLKEILPEWVSVGFSGGTYIGRQATHEVLNWYFTSNLINTNS.

Asn10 is a glycosylation site (N-linked (GlcNAc...) asparagine; partial). Asn116 carries N-linked (GlcNAc...) asparagine glycosylation. Residues Glu126 and Asp128 each contribute to the Mn(2+) site. Positions 128, 135, and 138 each coordinate Ca(2+). 2 residues coordinate Mn(2+): Asp138 and His143.

The protein belongs to the leguminous lectin family.

Its function is as follows. L-fucose specific lectin. This chain is Anti-H(O) lectin 1, found in Ulex europaeus (Furze).